Here is a 278-residue protein sequence, read N- to C-terminus: Methyltransferase GfsG (278 aa).

S-adenosyl-L-methionine-binding positions include Gln105 and 128–129 (DA). Catalysis depends on Glu146, which acts as the Proton acceptor. His150 is a binding site for S-adenosyl-L-methionine.

Belongs to the methyltransferase superfamily.

The protein operates within antibiotic biosynthesis. Functionally, methylase required for synthesis of the 16-membered macrolide antibiotics FD-891 and FD-892. In vitro uses S-adenosyl-L-methionine to methylate a number of biosynthetic intermediates in the synthesis of FD-891. This Streptomyces halstedii protein is Methyltransferase GfsG.